The chain runs to 311 residues: Urease accessory protein UreD (311 aa).

This sequence belongs to the UreD family. As to quaternary structure, ureD, UreF and UreG form a complex that acts as a GTP-hydrolysis-dependent molecular chaperone, activating the urease apoprotein by helping to assemble the nickel containing metallocenter of UreC. The UreE protein probably delivers the nickel.

Its subcellular location is the cytoplasm. Functionally, required for maturation of urease via the functional incorporation of the urease nickel metallocenter. In Parasynechococcus marenigrum (strain WH8102), this protein is Urease accessory protein UreD.